Here is a 252-residue protein sequence, read N- to C-terminus: Small ribosomal subunit protein eS1 (252 aa).

Belongs to the eukaryotic ribosomal protein eS1 family. In terms of assembly, component of the small ribosomal subunit. Mature ribosomes consist of a small (40S) and a large (60S) subunit. The 40S subunit contains about 33 different proteins and 1 molecule of RNA (18S). The 60S subunit contains about 49 different proteins and 3 molecules of RNA (25S, 5.8S and 5S).

The protein resides in the cytoplasm. The polypeptide is Small ribosomal subunit protein eS1 (Enterocytozoon bieneusi (strain H348) (Microsporidian parasite)).